The primary structure comprises 239 residues: Elongation factor Ts (239 aa).

The interval 82 to 85 (TDFV) is involved in Mg(2+) ion dislocation from EF-Tu. The segment at 213–239 (AAQTKPKAEEKPAAKKATSKKKKGKKK) is disordered. The span at 229 to 239 (ATSKKKKGKKK) shows a compositional bias: basic residues.

It belongs to the EF-Ts family.

It is found in the cytoplasm. Functionally, associates with the EF-Tu.GDP complex and induces the exchange of GDP to GTP. It remains bound to the aminoacyl-tRNA.EF-Tu.GTP complex up to the GTP hydrolysis stage on the ribosome. The chain is Elongation factor Ts from Acaryochloris marina (strain MBIC 11017).